Here is a 786-residue protein sequence, read N- to C-terminus: Diamine oxidase [copper-containing] 1, peroxisomal (786 aa).

Substrate is bound at residue 419–430 (AFDAGEDGLGKN). Asp-421 acts as the Proton acceptor in catalysis. The cysteines at positions 440 and 466 are disulfide-linked. Substrate is bound at residue 502 to 507 (VANYEY). Tyr-505 functions as the Schiff-base intermediate with substrate; via topaquinone in the catalytic mechanism. 2',4',5'-topaquinone is present on Tyr-505. Residues His-555 and His-557 each contribute to the Cu cation site. Positions 710 and 711 each coordinate Mn(2+). A Cu cation-binding site is contributed by His-721.

It belongs to the copper/topaquinone oxidase family. Homodimer. Cu cation is required as a cofactor. Zn(2+) serves as cofactor. It depends on L-topaquinone as a cofactor. Post-translationally, topaquinone (TPQ) is generated by copper-dependent autoxidation of a specific tyrosyl residue. Mainly expressed in roots, and, to a lower extent, in leaves and stems.

The protein localises to the peroxisome. It catalyses the reaction a primary methyl amine + O2 + H2O = an aldehyde + H2O2 + NH4(+). The catalysed reaction is N-methylputrescine + O2 + H2O = 4-methylaminobutanal + H2O2 + NH4(+). Its pathway is alkaloid biosynthesis; nicotine biosynthesis. It functions in the pathway amine and polyamine degradation; putrescine degradation. Functionally, involved in putrescine catabolism in peroxisomes. May also be involved in the biosynthesis of pyridine alkaloid natural products, leading mainly to the production of anabasine, anatabine, nicotine and nornicotine, effective deterrents against herbivores with antiparasitic and pesticide properties (neurotoxins); nornicotine serves as the precursor in the synthesis of the carcinogen compound N'-nitrosonornicotine (NNN). Oxidizes preferentially non-N-methylated amines. The protein is Diamine oxidase [copper-containing] 1, peroxisomal of Nicotiana tabacum (Common tobacco).